The chain runs to 367 residues: Peptide chain release factor 2 (367 aa).

Residue Q254 is modified to N5-methylglutamine.

The protein belongs to the prokaryotic/mitochondrial release factor family. Post-translationally, methylated by PrmC. Methylation increases the termination efficiency of RF2.

The protein resides in the cytoplasm. Functionally, peptide chain release factor 2 directs the termination of translation in response to the peptide chain termination codons UGA and UAA. This Acidovorax ebreus (strain TPSY) (Diaphorobacter sp. (strain TPSY)) protein is Peptide chain release factor 2.